The primary structure comprises 396 residues: NAD(P)H oxidoreductase RTN4IP1, mitochondrial (396 aa).

A mitochondrion-targeting transit peptide spans 1–40; the sequence is MGFLKTCVFRRNACTAVCFWRSQVVQKPSVRKISTTSPRS. The Enoyl reductase (ER) domain occupies 52–393; it reads GSNEVLRFTQ…RGHARGKTVI (342 aa). Residues serine 214, glycine 216, valine 217, serine 237, tyrosine 255, asparagine 276, leucine 300, alanine 341, phenylalanine 343, histidine 386, alanine 387, and arginine 388 each coordinate NADPH.

Belongs to the zinc-containing alcohol dehydrogenase family. Quinone oxidoreductase subfamily. Interacts with RTN4, UQCRC1 and UQCRC2.

The protein localises to the mitochondrion matrix. It is found in the mitochondrion outer membrane. It catalyses the reaction a 3-demethylubiquinone + NADH + 2 H(+) = a 3-demethylubiquinol + NAD(+). It carries out the reaction a 3-demethylubiquinone + NADPH + 2 H(+) = a 3-demethylubiquinol + NADP(+). The catalysed reaction is 3-demethylubiquinone-10 + NADH + 2 H(+) = 3-demethylubiquinol-10 + NAD(+). The enzyme catalyses 3-demethylubiquinone-10 + NADPH + 2 H(+) = 3-demethylubiquinol-10 + NADP(+). The protein operates within cofactor biosynthesis; ubiquinone biosynthesis. In terms of biological role, NAD(P)H oxidoreductase involved in the ubiquinone biosynthetic pathway. Required for the O-methyltransferase activity of COQ3. Able to catalyze the oxidoreduction of 3-demethylubiquinone into 3-demethylubiquinol in vitro. However, it is unclear if 3-demethylubiquinone constitutes a substrate in vivo. May also play a role in the regulation of retinal ganglion cell (RGC) neurite outgrowth, and hence in the development of the inner retina and optic nerve. Appears to be a potent inhibitor of regeneration following spinal cord injury. The polypeptide is NAD(P)H oxidoreductase RTN4IP1, mitochondrial (RTN4IP1) (Bos taurus (Bovine)).